The following is a 365-amino-acid chain: Histidinol-phosphate aminotransferase 2 (365 aa).

Position 226 is an N6-(pyridoxal phosphate)lysine (Lys-226).

Belongs to the class-II pyridoxal-phosphate-dependent aminotransferase family. Histidinol-phosphate aminotransferase subfamily. Homodimer. It depends on pyridoxal 5'-phosphate as a cofactor.

It carries out the reaction L-histidinol phosphate + 2-oxoglutarate = 3-(imidazol-4-yl)-2-oxopropyl phosphate + L-glutamate. The protein operates within amino-acid biosynthesis; L-histidine biosynthesis; L-histidine from 5-phospho-alpha-D-ribose 1-diphosphate: step 7/9. The protein is Histidinol-phosphate aminotransferase 2 (hisC2) of Pasteurella multocida (strain Pm70).